Reading from the N-terminus, the 301-residue chain is 2-oxo-3-(phosphooxy)propyl 3-oxoalkanoate synthase (301 aa).

This sequence belongs to the AfsA family.

It catalyses the reaction a medium-chain 3-oxoacyl-[ACP] + dihydroxyacetone phosphate = a (4-alkanoyl-5-oxo-2,5-dihydrofuran-3-yl)methyl phosphate + holo-[ACP] + H2O. In terms of biological role, involved in the biosynthesis of A factor (2-isocapryloyl-3R-hydroxymethyl-gamma-butyrolactone), a gamma-butyrolactone autoregulator that triggers secondary metabolism and morphogenesis in Streptomyces. Catalyzes beta-ketoacyl transfer from 8-methyl-3-oxononanoyl-acyl carrier protein (ACP) to the hydroxyl group of dihydroxyacetone phosphate (DHAP), thus producing an 8-methyl-3-oxononanoyl-DHAP ester. This chain is 2-oxo-3-(phosphooxy)propyl 3-oxoalkanoate synthase, found in Streptomyces griseus.